The sequence spans 154 residues: MutT-like protein (154 aa).

Positions 15-136 constitute a Nudix hydrolase domain; it reads PLHSVSVAGV…YAIRLLDALD (122 aa). Residues Gly-48, Glu-63, Glu-66, and Glu-67 each contribute to the Mg(2+) site. The Nudix box motif lies at 48-69; sequence GVLELDETPETGVAREVWEETG.

It belongs to the Nudix hydrolase family.

In Streptomyces ambofaciens, this protein is MutT-like protein.